Here is a 217-residue protein sequence, read N- to C-terminus: Non-structural protein NS3 (217 aa).

The protein belongs to the orbivirus NS3 family.

In terms of biological role, may play a role in the release of virions from infected cells. This Camelus dromedarius (Dromedary) protein is Non-structural protein NS3 (Segment-10).